A 363-amino-acid polypeptide reads, in one-letter code: MNILQEPIDFLKKDELKNIDLSQMDKKERYKIWKRIPKCELHCHLDLCFSADFFLSCVRKYNLQPNLSDEEVLDYYLFAKGGKSLGEFVEKAIRVADIFQDYEMIEDLAKHAVFNKYKEGVVLMEFRYSPTFVAFKHNLDIELIHQAIVKGIKEVVELLDHKIDVTLLCIGDTGHRAADIKASADFCLKHKADFVGFDHGGHEVDLKPYKEIFDYVKEGGMHLTVHAGEDVTLPNLNTLYSAIQVLKVERIGHGIRVSESQELIDMVKENNILLEVCPISNVLLKNAKSFDTHPIRKLYDAGVKVSVSSDDPGMFLTNINDDYEKLYTHLHFTLEDFMKMNEWALEKSFIGCDIKEKIKKLYF.

H42 and H44 together coordinate Zn(2+). A purine D-ribonucleoside-binding positions include 44–46, D172, and G201; that span reads HLD. Residues 170-184 form a gating helix loop; regulates binding affinity for substrates and thus substrate selectivity region; sequence IGDTGHRAADIKASA. H226 lines the Zn(2+) pocket. The a purine D-ribonucleoside site is built by E229, H253, and D310. D310 lines the Zn(2+) pocket.

It belongs to the metallo-dependent hydrolases superfamily. Adenosine and AMP deaminases family. It depends on Zn(2+) as a cofactor.

The catalysed reaction is adenosine + H2O + H(+) = inosine + NH4(+). It catalyses the reaction S-methyl-5'-thioadenosine + H2O + H(+) = S-methyl-5'-thioinosine + NH4(+). It participates in purine metabolism; purine nucleoside salvage. Inhibited by coformycin and methylthiocoformycin (MT-coformycin). Functionally, catalyzes the hydrolytic deamination of adenosine to produce inosine. Unlike mammalian adenosine deaminases, also catalyzes the deamination of 5'-methylthioadenosine (MTA), a by-product of polyamine biosynthesis, to produce 5'-methylthioinosine (MTI). Plays an essential role in the purine salvage pathway which allows the parasite to use host cell purines for the synthesis of nucleic acids. The polypeptide is Adenosine deaminase (Plasmodium knowlesi).